Here is a 280-residue protein sequence, read N- to C-terminus: Mesaconyl-C(4)-CoA hydratase (280 aa).

The protein belongs to the HTD2 family. Homodimer.

It catalyses the reaction (3S)-citramalyl-CoA = 3-methylfumaryl-CoA + H2O. Its activity is regulated as follows. Inhibited by 3-methylfumaryl-CoA concentrations above 0.3 mM. Its function is as follows. Involved in the glyoxylate assimilation cycle used to regenerate acetyl-CoA and produce pyruvate as universal precursor for biosynthesis. Catalyzes the hydration of 3-methylfumaryl-CoA (mesaconyl-C4-CoA) to (3S)-citramalyl-CoA. In Chloroflexus aurantiacus (strain ATCC 29366 / DSM 635 / J-10-fl), this protein is Mesaconyl-C(4)-CoA hydratase (meh).